Here is a 132-residue protein sequence, read N- to C-terminus: uncharacterized protein (132 aa).

Residues 45–115 (VHMEKHKLKI…VVIVTTAEGK (71 aa)) form the BIG2 domain.

The protein to B.anthracis BA1245.

This is an uncharacterized protein from Bacillus cereus (strain ATCC 14579 / DSM 31 / CCUG 7414 / JCM 2152 / NBRC 15305 / NCIMB 9373 / NCTC 2599 / NRRL B-3711).